The primary structure comprises 831 residues: Probable DNA-directed RNA polymerase (831 aa).

Catalysis depends on residues aspartate 490, lysine 560, and aspartate 738.

Belongs to the phage and mitochondrial RNA polymerase family.

The protein localises to the mitochondrion. The catalysed reaction is RNA(n) + a ribonucleoside 5'-triphosphate = RNA(n+1) + diphosphate. DNA-dependent RNA polymerase catalyzes the transcription of DNA into RNA using the four ribonucleoside triphosphates as substrates. The protein is Probable DNA-directed RNA polymerase of Gelasinospora sp. (strain G114).